Here is a 61-residue protein sequence, read N- to C-terminus: Putative defensin-like protein 72 (61 aa).

Cystine bridges form between C21–C59, C25–C48, C34–C57, and C38–C58.

Belongs to the DEFL family.

In Arabidopsis thaliana (Mouse-ear cress), this protein is Putative defensin-like protein 72.